A 337-amino-acid chain; its full sequence is ATP-dependent 6-phosphofructokinase (337 aa).

Residue Gly-11 coordinates ATP. 21–25 (RAVVR) contributes to the ADP binding site. ATP is bound by residues 72-73 (RY) and 102-105 (GDGS). Residue Asp-103 participates in Mg(2+) binding. 125–127 (TID) contacts substrate. Asp-127 (proton acceptor) is an active-site residue. Arg-154 provides a ligand contact to ADP. Substrate is bound by residues Arg-162 and 169–171 (MGR). Residues 185–187 (GAD), Arg-212, and 214–216 (KNH) each bind ADP. Residues Glu-223, Arg-245, and 251-254 (HILR) each bind substrate.

The protein belongs to the phosphofructokinase type A (PFKA) family. ATP-dependent PFK group I subfamily. Prokaryotic clade 'B1' sub-subfamily. In terms of assembly, homotetramer. Requires Mg(2+) as cofactor.

The protein resides in the cytoplasm. The enzyme catalyses beta-D-fructose 6-phosphate + ATP = beta-D-fructose 1,6-bisphosphate + ADP + H(+). It participates in carbohydrate degradation; glycolysis; D-glyceraldehyde 3-phosphate and glycerone phosphate from D-glucose: step 3/4. With respect to regulation, allosterically activated by ADP and other diphosphonucleosides, and allosterically inhibited by phosphoenolpyruvate. Functionally, catalyzes the phosphorylation of D-fructose 6-phosphate to fructose 1,6-bisphosphate by ATP, the first committing step of glycolysis. The protein is ATP-dependent 6-phosphofructokinase of Streptococcus equi subsp. equi (strain 4047).